We begin with the raw amino-acid sequence, 757 residues long: Polymeric immunoglobulin receptor (757 aa).

The signal sequence occupies residues 1–18 (MSRLFLACLLAIFPVVSM). The region spanning 19–126 (KSPIFGPEEV…RGLNFDVSLE (108 aa)) is the Ig-like V-type 1; required for binding to polymeric IgA and IgM domain. The Extracellular portion of the chain corresponds to 19 to 632 (KSPIFGPEEV…TGYSGSSKAL (614 aa)). 7 disulfide bridges follow: Cys40–Cys110, Cys56–Cys64, Cys152–Cys220, Cys257–Cys324, Cys271–Cys279, Cys370–Cys440, and Cys384–Cys394. Asn83 is a glycosylation site (N-linked (GlcNAc...) asparagine). Ig-like V-type domains lie at 145-237 (GRTV…DLQV), 250-341 (RSSV…VQAW), 353-457 (ASPS…LKVV), and 461-560 (PSLK…VYVA). N-linked (GlcNAc...) asparagine glycosylation is found at Asn420 and Asn468. Disulfide bonds link Cys481–Cys543, Cys485–Cys519, and Cys495–Cys502. The disordered stretch occupies residues 607 to 627 (KDAAGGPGAPADPGRPTGYSG). Residues 633-653 (VSTLVPLALVLVAGVVAIGVV) form a helical membrane-spanning segment. The Cytoplasmic segment spans residues 654–757 (RARHRKNVDR…AATQNGPTEA (104 aa)). Ser665, Ser674, Ser681, and Ser727 each carry phosphoserine. Residues 679-688 (ENSRDFEGRD) are compositionally biased toward basic and acidic residues. The tract at residues 679 to 730 (ENSRDFEGRDNMGASPEAQETSLGGKDEFATTTEDTVESKEPKKAKRSSKEE) is disordered.

Interacts (mainly via CDR1-like domain) with dimeric IgA. Interacts (mainly via CDR2-like domain) with pentameric IgM. In terms of assembly, either free or part of the secretory IgA (sIgA) complex that consists of two, four or five IgA monomers, and two additional non-Ig polypeptides, namely the JCHAIN and the secretory component (the proteolytic product of PIGR). Free secretory component interacts with bacterial antigens toxA of C.difficile and eae of E.coli. Post-translationally, in the absence of dimeric IgA, Ser-727 is phosphorylated which allows PIGR to function normally. In terms of processing, N-glycosylated. N-glycosylation is required for anchoring IgA molecules to mucus, but is not necessary for Ig binding. Found in mammary gland, jejunum, lung, kidney and small intestine.

It is found in the cell membrane. The protein resides in the secreted. Mediates selective transcytosis of polymeric IgA and IgM across mucosal epithelial cells. Binds polymeric IgA and IgM at the basolateral surface of epithelial cells. The complex is then transported across the cell to be secreted at the apical surface. During this process, a cleavage occurs that separates the extracellular (known as the secretory component) from the transmembrane segment. In terms of biological role, through its N-linked glycans ensures anchoring of secretory IgA (sIgA) molecules to mucus lining the epithelial surface to neutralize extracellular pathogens. On its own (free form) may act as a non-specific microbial scavenger to prevent pathogen interaction with epithelial cells. The sequence is that of Polymeric immunoglobulin receptor (PIGR) from Bos taurus (Bovine).